Reading from the N-terminus, the 568-residue chain is AT-rich interactive domain-containing protein 3B (568 aa).

Met-1 is subject to N-acetylmethionine. The span at 1–22 (MEPLQQQQQQQQQKQPQQPLLQ) shows a compositional bias: low complexity. The segment at 1–174 (MEPLQQQQQQ…SVPTAGQPSW (174 aa)) is disordered. A Phosphoserine modification is found at Ser-87. The span at 88–107 (EPEEEEGGLEDEDGDDDVAE) shows a compositional bias: acidic residues. The segment covering 151–160 (TKEDHTKDAS) has biased composition (basic and acidic residues). The segment at 201-374 (SRDFAKLYEL…SSPKIRFSIL (174 aa)) is interaction with RB1. An ARID domain is found at 213-305 (DPERKEFLDD…YLYAYECEKK (93 aa)). Ser-309 carries the post-translational modification Phosphoserine. Arg-370 carries the post-translational modification Asymmetric dimethylarginine. The interval 378–403 (SSSGTSASSPRIPPASTLRKGDGVPV) is disordered. The region spanning 425 to 522 (GPLEHLRERL…GVLFAQKPVV (98 aa)) is the REKLES domain. Residues 495–518 (SNIGSINMSVDIDGTTYTGVLFAQ) are interaction with ARID3A. Residues 529–559 (TPQSIGSSASSSNSSSSHCSPSPTSSRGTPS) are compositionally biased toward low complexity. The segment at 529-568 (TPQSIGSSASSSNSSSSHCSPSPTSSRGTPSAEPSTSWSL) is disordered.

In terms of assembly, heterodimer with ARID3A. Interacts with unphosphorylated RB1. Expressed at high levels in testis. Also expressed in prostate, thyroid and thymus.

The protein resides in the nucleus. In terms of biological role, transcription factor involved in the production of cranial mesenchymal tissues. Favors nuclear targeting of ARID3A. The sequence is that of AT-rich interactive domain-containing protein 3B (Arid3b) from Mus musculus (Mouse).